The chain runs to 725 residues: Dipeptidyl-peptidase 5 (725 aa).

An N-terminal signal peptide occupies residues 1-18; sequence MGALRWLSIAATASTALA. N-linked (GlcNAc...) asparagine glycans are attached at residues N75, N96, N153, N258, N383, and N453. The active-site Charge relay system is S563. Residue N610 is glycosylated (N-linked (GlcNAc...) asparagine). Catalysis depends on charge relay system residues D646 and H678.

It belongs to the peptidase S9C family.

The protein resides in the secreted. This chain is Dipeptidyl-peptidase 5, found in Aspergillus oryzae (strain ATCC 42149 / RIB 40) (Yellow koji mold).